Here is a 360-residue protein sequence, read N- to C-terminus: Peptide chain release factor 1 (360 aa).

N5-methylglutamine is present on Q235. The tract at residues 285–313 (KRQQAEASTRRNLLGSGDRSDRNRTYNFP) is disordered.

Belongs to the prokaryotic/mitochondrial release factor family. In terms of processing, methylated by PrmC. Methylation increases the termination efficiency of RF1.

It localises to the cytoplasm. Peptide chain release factor 1 directs the termination of translation in response to the peptide chain termination codons UAG and UAA. This Klebsiella pneumoniae (strain 342) protein is Peptide chain release factor 1.